Here is a 138-residue protein sequence, read N- to C-terminus: uncharacterized protein (138 aa).

It localises to the plastid. The protein localises to the chloroplast. This is an uncharacterized protein from Chlorella vulgaris (Green alga).